We begin with the raw amino-acid sequence, 310 residues long: N-acetylmuramic acid 6-phosphate etherase (310 aa).

The 164-residue stretch at 64–227 folds into the SIS domain; that stretch reads ITSRLKSNGR…STSVMIKLGK (164 aa). Catalysis depends on Glu92, which acts as the Proton donor. Glu123 is a catalytic residue.

The protein belongs to the GCKR-like family. MurNAc-6-P etherase subfamily. In terms of assembly, homodimer.

The catalysed reaction is N-acetyl-D-muramate 6-phosphate + H2O = N-acetyl-D-glucosamine 6-phosphate + (R)-lactate. It functions in the pathway amino-sugar metabolism; N-acetylmuramate degradation. Specifically catalyzes the cleavage of the D-lactyl ether substituent of MurNAc 6-phosphate, producing GlcNAc 6-phosphate and D-lactate. This Prochlorococcus marinus (strain NATL2A) protein is N-acetylmuramic acid 6-phosphate etherase.